The following is a 125-amino-acid chain: uncharacterized protein (125 aa).

It belongs to the asfivirus B125R family.

This is an uncharacterized protein from African swine fever virus (isolate Tick/Malawi/Lil 20-1/1983) (ASFV).